The following is a 237-amino-acid chain: Uridylate kinase (237 aa).

ATP is bound at residue 10-13; sequence KLSG. Residue G52 participates in UMP binding. Positions 53 and 57 each coordinate ATP. UMP-binding positions include D72 and 133 to 140; that span reads TGNPFFTT. Residues T160, Y166, and D169 each coordinate ATP.

The protein belongs to the UMP kinase family. In terms of assembly, homohexamer.

Its subcellular location is the cytoplasm. It carries out the reaction UMP + ATP = UDP + ADP. Its pathway is pyrimidine metabolism; CTP biosynthesis via de novo pathway; UDP from UMP (UMPK route): step 1/1. Its activity is regulated as follows. Inhibited by UTP. Catalyzes the reversible phosphorylation of UMP to UDP. The protein is Uridylate kinase of Thiobacillus denitrificans (strain ATCC 25259 / T1).